A 136-amino-acid polypeptide reads, in one-letter code: MFQSLIAIDYGKARIGIASGQMITKTATPIGTVETYDGVPNWIELDKIIKRWNPSDIIIGLPLDTQNFETDITKSAKDFAKEVQQRYQRKVHLINEAYSTREARWRLEEVKSKKVSHIKVDALAACVILETWMSEN.

The protein belongs to the YqgF nuclease family.

The protein localises to the cytoplasm. Could be a nuclease involved in processing of the 5'-end of pre-16S rRNA. In Francisella tularensis subsp. tularensis (strain WY96-3418), this protein is Putative pre-16S rRNA nuclease.